The sequence spans 1039 residues: MSKDSDNPGYESGYESDTEEKKQEQAVPAQPISSTANKDGNPDTSEFDPLANKEYTEEQKQKLEQEQKEYFSQTTPQELEADDGFSFTPASSTQSTPSISSLSGGISSDSQTSDPITKAVRETIIQPQKDEIAEQILKDLAALADRDLAEQKRKEIEEEKDKTLSAFFGNPANREFIDKALENPELKKKLESIEIAGYKNVLSTYSAANGYQGGFKPVQWENQISASDLRATVVRNDAGDELCTLNETTVKTKPFTVAKQDGTQVQINSYREIDFPIKLDKADGSMHLSMVALKADGTKPSKDKAVYFTAHYEEGPNGKPQLKEISSPKPLKFAGDGPDAVAYIEHGGEIYTLAVTRGKYKEMMREVELNQGQSVDLSQTIAEDLTKVQGRSQETPQPIITPNQELKSSIETPTTTQVPPITPANQPLQPETSQMPQPQQVNPNLLNAATALSTSMQDLLNYVNAGLTKEKDGNKQIDLINEAATAILNNEKSDIAEKQANIIALTENTVNNNDLTPDTKVAGVNAVLETIKNDQNTPDLEKSKMLEATVAIALNSENLEPKQKQQMLEKAVDVGLSLKDDASRVTAIDGITDAVIKSNLSTEDKGTMLIAVGDKVNASELSNAEKQKLLGSVLKKGVEAQVLSPEQQQLMQQNLDKITAEQTKNAQITEVQGILANPAFNTIAKTEAIQNVTTKVLDSPIKAEIKGETLESITKVVAESPLNGQDKADIVKGMGEAIASHKTMAPTEKISTIESVEKGVAESITDLEDKKLMTKGLVEGIYEGKANPEITSEKTKAVSRGIDKSTAIPEDKQALKDAANEAALDRETQNLTEGLKRQNLGEPKPRDDIYNKAQDVADALKNVITPVLDAHPEKREVSEEEEVVKKTSSILNDISKLAIEKVNNFRAMLSPDGNLKTLEEKKAESTKKVDELVKEFGTKSSTEEQQSFIKANLIDDKTLSKEIRLQTINKLLQEQAQKRAEAIENPNVKTEDVRVVSGVNIKDNIKIMGALMNARDSIIQSENLNKSTPIKRESSFPPR.

3 disordered regions span residues 1–115 (MSKD…TSDP), 408–438 (SSIE…MPQP), and 1020–1039 (QSEN…FPPR). Polar residues predominate over residues 31–44 (PISSTANKDGNPDT). The segment covering 54–69 (EYTEEQKQKLEQEQKE) has biased composition (basic and acidic residues). Positions 85-114 (FSFTPASSTQSTPSISSLSGGISSDSQTSD) are enriched in low complexity. The span at 424–438 (ANQPLQPETSQMPQP) shows a compositional bias: polar residues. Basic and acidic residues predominate over residues 1030–1039 (IKRESSFPPR).

It localises to the cytoplasm. The protein is Antigenic heat-stable 120 kDa protein (sca4) of Rickettsia felis (strain ATCC VR-1525 / URRWXCal2) (Rickettsia azadi).